The primary structure comprises 100 residues: Large ribosomal subunit protein uL23 (100 aa).

It belongs to the universal ribosomal protein uL23 family. Part of the 50S ribosomal subunit. Contacts protein L29, and trigger factor when it is bound to the ribosome.

Functionally, one of the early assembly proteins it binds 23S rRNA. One of the proteins that surrounds the polypeptide exit tunnel on the outside of the ribosome. Forms the main docking site for trigger factor binding to the ribosome. The chain is Large ribosomal subunit protein uL23 from Synechococcus sp. (strain CC9902).